The sequence spans 415 residues: uncharacterized protein (415 aa).

Residues cysteine 85, cysteine 91, cysteine 94, and cysteine 175 each contribute to the [4Fe-4S] cluster site. S-adenosyl-L-methionine is bound by residues glutamine 248, tyrosine 276, glutamate 297, and asparagine 344. The Nucleophile role is filled by cysteine 371.

This sequence belongs to the class I-like SAM-binding methyltransferase superfamily. RNA M5U methyltransferase family.

This is an uncharacterized protein from Leptospira interrogans serogroup Icterohaemorrhagiae serovar copenhageni (strain Fiocruz L1-130).